We begin with the raw amino-acid sequence, 158 residues long: ATP synthase subunit b', chloroplastic (158 aa).

The chain crosses the membrane as a helical span at residues 21–41 (GTLPLMALQFLILMLLLNTIF).

Belongs to the ATPase B chain family. F-type ATPases have 2 components, F(1) - the catalytic core - and F(0) - the membrane proton channel. F(1) has five subunits: alpha(3), beta(3), gamma(1), delta(1), epsilon(1). F(0) has four main subunits: a(1), b(1), b'(1) and c(10-14). The alpha and beta chains form an alternating ring which encloses part of the gamma chain. F(1) is attached to F(0) by a central stalk formed by the gamma and epsilon chains, while a peripheral stalk is formed by the delta, b and b' chains.

The protein localises to the plastid. Its subcellular location is the chloroplast thylakoid membrane. Functionally, f(1)F(0) ATP synthase produces ATP from ADP in the presence of a proton or sodium gradient. F-type ATPases consist of two structural domains, F(1) containing the extramembraneous catalytic core and F(0) containing the membrane proton channel, linked together by a central stalk and a peripheral stalk. During catalysis, ATP synthesis in the catalytic domain of F(1) is coupled via a rotary mechanism of the central stalk subunits to proton translocation. Its function is as follows. Component of the F(0) channel, it forms part of the peripheral stalk, linking F(1) to F(0). The b'-subunit is a diverged and duplicated form of b found in plants and photosynthetic bacteria. The chain is ATP synthase subunit b', chloroplastic from Porphyra purpurea (Red seaweed).